A 351-amino-acid polypeptide reads, in one-letter code: Phosphoribosylformylglycinamidine cyclo-ligase (351 aa).

It belongs to the AIR synthase family.

It is found in the cytoplasm. The enzyme catalyses 2-formamido-N(1)-(5-O-phospho-beta-D-ribosyl)acetamidine + ATP = 5-amino-1-(5-phospho-beta-D-ribosyl)imidazole + ADP + phosphate + H(+). The protein operates within purine metabolism; IMP biosynthesis via de novo pathway; 5-amino-1-(5-phospho-D-ribosyl)imidazole from N(2)-formyl-N(1)-(5-phospho-D-ribosyl)glycinamide: step 2/2. The chain is Phosphoribosylformylglycinamidine cyclo-ligase from Burkholderia ambifaria (strain ATCC BAA-244 / DSM 16087 / CCUG 44356 / LMG 19182 / AMMD) (Burkholderia cepacia (strain AMMD)).